The primary structure comprises 517 residues: ATP synthase subunit alpha (517 aa).

173–180 (GDRQTGKT) is an ATP binding site.

This sequence belongs to the ATPase alpha/beta chains family. As to quaternary structure, F-type ATPases have 2 components, CF(1) - the catalytic core - and CF(0) - the membrane proton channel. CF(1) has five subunits: alpha(3), beta(3), gamma(1), delta(1), epsilon(1). CF(0) has three main subunits: a(1), b(2) and c(9-12). The alpha and beta chains form an alternating ring which encloses part of the gamma chain. CF(1) is attached to CF(0) by a central stalk formed by the gamma and epsilon chains, while a peripheral stalk is formed by the delta and b chains.

The protein resides in the cell inner membrane. It catalyses the reaction ATP + H2O + 4 H(+)(in) = ADP + phosphate + 5 H(+)(out). Functionally, produces ATP from ADP in the presence of a proton gradient across the membrane. The alpha chain is a regulatory subunit. This Legionella pneumophila (strain Lens) protein is ATP synthase subunit alpha.